Consider the following 151-residue polypeptide: Methylglyoxal synthase (151 aa).

The 146-residue stretch at 6–151 (RVMPAHKHIA…DYDAYLAERV (146 aa)) folds into the MGS-like domain. Substrate-binding positions include His-19, Lys-23, 45–48 (TGTT), and 65–66 (SG). Asp-71 acts as the Proton donor/acceptor in catalysis. His-98 contacts substrate.

Belongs to the methylglyoxal synthase family.

It catalyses the reaction dihydroxyacetone phosphate = methylglyoxal + phosphate. Functionally, catalyzes the formation of methylglyoxal from dihydroxyacetone phosphate. This Aliivibrio fischeri (strain MJ11) (Vibrio fischeri) protein is Methylglyoxal synthase.